The following is a 1074-amino-acid chain: Phospholipase D1 (1074 aa).

A PX domain is found at 81 to 212 (VKAQVLEVER…TEFLDVSQLS (132 aa)). The region spanning 219–328 (PKGLEGMIMK…WGGAIEEFIQ (110 aa)) is the PH domain. Residues C240 and C241 are each lipidated (S-palmitoyl cysteine). Residues 459 to 486 (YLWAHHEKLVIIDQSVAFVGGIDLAYGR) enclose the PLD phosphodiesterase 1 domain. Positions 463–928 (HHEKLVIIDQ…MLGKRDSEMA (466 aa)) are catalytic. Phosphoserine occurs at positions 499, 561, and 629. The region spanning 891 to 918 (ELIYVHSKLLIADDNTVIIGSANINDRS) is the PLD phosphodiesterase 2 domain.

Belongs to the phospholipase D family. In terms of assembly, interacts with PIP5K1B. In terms of processing, phosphorylated on serine and threonine residues. It is uncertain whether palmitoylation is on Cys-240 and/or Cys-241. Palmitoylation is required prior to phosphorylation.

The protein localises to the cytoplasm. It is found in the perinuclear region. The protein resides in the endoplasmic reticulum membrane. Its subcellular location is the golgi apparatus membrane. It localises to the late endosome membrane. The catalysed reaction is a 1,2-diacyl-sn-glycero-3-phosphocholine + H2O = a 1,2-diacyl-sn-glycero-3-phosphate + choline + H(+). It catalyses the reaction ethanol + a 1,2-diacyl-sn-glycero-3-phosphocholine = 1,2-diacyl-sn-glycero-3-phosphoethanol + choline. The enzyme catalyses 1,2-dihexadecanoyl-sn-glycero-3-phosphocholine + H2O = 1,2-dihexadecanoyl-sn-glycero-3-phosphate + choline + H(+). Its activity is regulated as follows. Stimulated by phosphatidylinositol 4,5-bisphosphate and phosphatidylinositol 3,4,5-trisphosphate, activated by the phosphokinase C-alpha, by the ADP-ribosylation factor-1 (ARF-1), and to a lesser extent by GTP-binding proteins: RHO A, RAC-1 and CDC42. Inhibited by oleate. Function as phospholipase selective for phosphatidylcholine. Implicated as a critical step in numerous cellular pathways, including signal transduction, membrane trafficking, and the regulation of mitosis. May be involved in the regulation of perinuclear intravesicular membrane traffic. This chain is Phospholipase D1, found in Rattus norvegicus (Rat).